The chain runs to 132 residues: MSNKFLGTWKLVSSENFDDYMKALGVGLATRKLGNLAKPNVIISKKGDIITIRTESTFKNTEISFKLGQEFEETTADNRKTKSIITLERGALNQVQKWDGKETTIKRKLVDGKMVVECKMKGVVCTRIYEKV.

The residue at position 2 (Ser-2) is an N-acetylserine. (9Z)-octadecenoate is bound by residues Arg-107 and 127–129; that span reads RIY. Hexadecanoate-binding positions include Arg-107 and 127–129; that span reads RIY.

The protein belongs to the calycin superfamily. Fatty-acid binding protein (FABP) family. Monomer.

It is found in the cytoplasm. Its function is as follows. May play a role in lipid transport protein in Schwann cells. May bind cholesterol. The sequence is that of Myelin P2 protein (PMP2) from Oryctolagus cuniculus (Rabbit).